A 545-amino-acid chain; its full sequence is Eukaryotic translation initiation factor 3 subunit D-2 (545 aa).

The tract at residues 94–148 (FQRGRFRGNTRNNPRTRGRTGRGGAVTGTGGNQPGVGVNERTKYGKGRDNRRQMG) is disordered. Over residues 95–113 (QRGRFRGNTRNNPRTRGRT) the composition is skewed to basic residues. Positions 114-127 (GRGGAVTGTGGNQP) are enriched in gly residues. The segment covering 133-145 (ERTKYGKGRDNRR) has biased composition (basic and acidic residues). The tract at residues 287 to 301 (QFDLLTVNETALEPP) is RNA gate.

Belongs to the eIF-3 subunit D family. Component of the eukaryotic translation initiation factor 3 (eIF-3) complex. The eIF-3 complex interacts with pix.

The protein resides in the cytoplasm. Its function is as follows. mRNA cap-binding component of the eukaryotic translation initiation factor 3 (eIF-3) complex, which is involved in protein synthesis of a specialized repertoire of mRNAs and, together with other initiation factors, stimulates binding of mRNA and methionyl-tRNAi to the 40S ribosome. The eIF-3 complex specifically targets and initiates translation of a subset of mRNAs involved in cell proliferation. In the eIF-3 complex, eif3d specifically recognizes and binds the 7-methylguanosine cap of a subset of mRNAs. The chain is Eukaryotic translation initiation factor 3 subunit D-2 from Drosophila pseudoobscura pseudoobscura (Fruit fly).